The following is a 436-amino-acid chain: GTPase Der (436 aa).

EngA-type G domains follow at residues 4-167 and 176-351; these read PVVA…KNIP and VQFC…ENHS. GTP contacts are provided by residues 10 to 17, 57 to 61, 119 to 122, 182 to 189, 229 to 233, and 294 to 297; these read GRPNVGKS, DTGGI, NKLD, DTAGM, and NKWD. Residues 352-436 enclose the KH-like domain; it reads LRVQTNVLND…PIKIFARARK (85 aa).

Belongs to the TRAFAC class TrmE-Era-EngA-EngB-Septin-like GTPase superfamily. EngA (Der) GTPase family. In terms of assembly, associates with the 50S ribosomal subunit.

Functionally, GTPase that plays an essential role in the late steps of ribosome biogenesis. The protein is GTPase Der of Bacillus velezensis (strain DSM 23117 / BGSC 10A6 / LMG 26770 / FZB42) (Bacillus amyloliquefaciens subsp. plantarum).